A 133-amino-acid chain; its full sequence is Nickel-responsive regulator (133 aa).

Ni(2+) is bound by residues His-76, His-87, His-89, and Cys-95.

Belongs to the transcriptional regulatory CopG/NikR family. In terms of assembly, homotetramer. Requires Ni(2+) as cofactor.

Functionally, transcriptional repressor of the nikABCDE operon. Is active in the presence of excessive concentrations of intracellular nickel. This is Nickel-responsive regulator from Shigella dysenteriae serotype 1 (strain Sd197).